The following is a 458-amino-acid chain: Serine/threonine-protein kinase tricornered (458 aa).

Positions 92-389 (FEALKVIGRG…LEDLKSVPFF (298 aa)) constitute a Protein kinase domain. ATP-binding positions include 98 to 106 (IGRGAFGEV) and Lys121. The interaction with mats and Mob1 stretch occupies residues 118-179 (YAMKVLRKAD…EFLPGGDMMT (62 aa)). The active-site Proton acceptor is the Asp215. Phosphoserine is present on Ser287. Residues 390–458 (RGVDWEHIRE…YKRFEVRNLE (69 aa)) enclose the AGC-kinase C-terminal domain. Position 448 is a phosphothreonine (Thr448).

Belongs to the protein kinase superfamily. AGC Ser/Thr protein kinase family. As to quaternary structure, interacts with, and is activated by, Mob1. The cofactor is Mg(2+).

It localises to the cytoplasm. It is found in the nucleus. It catalyses the reaction L-seryl-[protein] + ATP = O-phospho-L-seryl-[protein] + ADP + H(+). It carries out the reaction L-threonyl-[protein] + ATP = O-phospho-L-threonyl-[protein] + ADP + H(+). Functionally, serine/threonine-protein kinase involved in controlling cell structure and proliferation of a variety of polarized outgrowths including epidermal hairs, bristles, arista laterals, and dendrites. Together with fry, maintains the integrity of epidermal hairs and is an essential component of the signaling pathway regulating dendritic branching of sensory neurons. Reduces neurite outgrowth by phosphorylating pav/pavarotti, thereby inhibiting its function in microtubule-microtubule sliding. The sequence is that of Serine/threonine-protein kinase tricornered from Drosophila pseudoobscura pseudoobscura (Fruit fly).